The following is a 90-amino-acid chain: Alpha-latrotoxin associated low molecular weight protein (90 aa).

A signal peptide spans M1 to A18.

It belongs to the arthropod CHH/MIH/GIH/VIH hormone family. Expressed by the venom gland.

Its subcellular location is the secreted. May increase the toxicity of alpha-latrotoxin and/or other venom components. Is non-toxic to mice and to the cockroach Periplaneta americana. The protein is Alpha-latrotoxin associated low molecular weight protein of Latrodectus geometricus (Brown widow spider).